Consider the following 166-residue polypeptide: Large ribosomal subunit protein uL10 (166 aa).

It belongs to the universal ribosomal protein uL10 family. In terms of assembly, part of the ribosomal stalk of the 50S ribosomal subunit. The N-terminus interacts with L11 and the large rRNA to form the base of the stalk. The C-terminus forms an elongated spine to which L12 dimers bind in a sequential fashion forming a multimeric L10(L12)X complex.

In terms of biological role, forms part of the ribosomal stalk, playing a central role in the interaction of the ribosome with GTP-bound translation factors. The sequence is that of Large ribosomal subunit protein uL10 from Shewanella amazonensis (strain ATCC BAA-1098 / SB2B).